A 359-amino-acid polypeptide reads, in one-letter code: Peptide chain release factor 1 (359 aa).

Glutamine 235 is subject to N5-methylglutamine.

This sequence belongs to the prokaryotic/mitochondrial release factor family. In terms of processing, methylated by PrmC. Methylation increases the termination efficiency of RF1.

The protein localises to the cytoplasm. Its function is as follows. Peptide chain release factor 1 directs the termination of translation in response to the peptide chain termination codons UAG and UAA. This chain is Peptide chain release factor 1, found in Methylibium petroleiphilum (strain ATCC BAA-1232 / LMG 22953 / PM1).